Here is a 232-residue protein sequence, read N- to C-terminus: Large ribosomal subunit protein uL1 (232 aa).

The protein belongs to the universal ribosomal protein uL1 family. In terms of assembly, part of the 50S ribosomal subunit.

In terms of biological role, binds directly to 23S rRNA. The L1 stalk is quite mobile in the ribosome, and is involved in E site tRNA release. Its function is as follows. Protein L1 is also a translational repressor protein, it controls the translation of the L11 operon by binding to its mRNA. This chain is Large ribosomal subunit protein uL1, found in Alkaliphilus oremlandii (strain OhILAs) (Clostridium oremlandii (strain OhILAs)).